A 299-amino-acid chain; its full sequence is Ribosomal protein L11 methyltransferase (299 aa).

Positions 139, 163, 185, and 232 each coordinate S-adenosyl-L-methionine.

It belongs to the methyltransferase superfamily. PrmA family.

Its subcellular location is the cytoplasm. It catalyses the reaction L-lysyl-[protein] + 3 S-adenosyl-L-methionine = N(6),N(6),N(6)-trimethyl-L-lysyl-[protein] + 3 S-adenosyl-L-homocysteine + 3 H(+). Functionally, methylates ribosomal protein L11. The polypeptide is Ribosomal protein L11 methyltransferase (Crocosphaera subtropica (strain ATCC 51142 / BH68) (Cyanothece sp. (strain ATCC 51142))).